The primary structure comprises 282 residues: Pantothenate synthetase (282 aa).

Residue 30–37 coordinates ATP; the sequence is MGALHAGH. His37 (proton donor) is an active-site residue. Gln61 lines the (R)-pantoate pocket. Gln61 serves as a coordination point for beta-alanine. 147–150 is a binding site for ATP; that stretch reads GEKD. Gln153 provides a ligand contact to (R)-pantoate. ATP is bound by residues Val176 and 184–187; that span reads LSSR.

Belongs to the pantothenate synthetase family. As to quaternary structure, homodimer.

Its subcellular location is the cytoplasm. It carries out the reaction (R)-pantoate + beta-alanine + ATP = (R)-pantothenate + AMP + diphosphate + H(+). It participates in cofactor biosynthesis; (R)-pantothenate biosynthesis; (R)-pantothenate from (R)-pantoate and beta-alanine: step 1/1. Functionally, catalyzes the condensation of pantoate with beta-alanine in an ATP-dependent reaction via a pantoyl-adenylate intermediate. The polypeptide is Pantothenate synthetase (Bacteroides fragilis (strain YCH46)).